Here is a 215-residue protein sequence, read N- to C-terminus: uncharacterized protein (215 aa).

6 helical membrane-spanning segments follow: residues 21–40, 50–69, 95–117, 122–144, 156–178, and 183–205; these read IIKY…VLIN, LIFS…SVIF, FFAI…YVLF, LEII…LVVL, ANFV…GLIL, and LQLI…FLSS.

This sequence belongs to the CcmB/CycW/HelB family.

It localises to the cell membrane. This is an uncharacterized protein from Rickettsia conorii (strain ATCC VR-613 / Malish 7).